Here is a 382-residue protein sequence, read N- to C-terminus: Alanine racemase (382 aa).

The Proton acceptor; specific for D-alanine role is filled by Lys-37. The residue at position 37 (Lys-37) is an N6-(pyridoxal phosphate)lysine. Arg-135 serves as a coordination point for substrate. The active-site Proton acceptor; specific for L-alanine is Tyr-267. Met-315 provides a ligand contact to substrate.

It belongs to the alanine racemase family. It depends on pyridoxal 5'-phosphate as a cofactor.

It carries out the reaction L-alanine = D-alanine. It participates in amino-acid biosynthesis; D-alanine biosynthesis; D-alanine from L-alanine: step 1/1. In terms of biological role, catalyzes the interconversion of L-alanine and D-alanine. May also act on other amino acids. The protein is Alanine racemase (alr) of Geobacter sulfurreducens (strain ATCC 51573 / DSM 12127 / PCA).